The chain runs to 750 residues: Photosystem I P700 chlorophyll a apoprotein A1 (750 aa).

Helical transmembrane passes span Val70 to Ala93, Leu156 to His179, Leu195 to Leu219, Ile291 to Tyr309, Trp346 to Tyr369, Leu385 to Val411, Ala433 to His455, and Phe531 to Leu549. Residues Cys573 and Cys582 each contribute to the [4Fe-4S] cluster site. The next 2 membrane-spanning stretches (helical) occupy residues His589–Trp610 and Leu664–Phe686. His675 serves as a coordination point for chlorophyll a'. Met683 and Tyr691 together coordinate chlorophyll a. Residue Trp692 coordinates phylloquinone. A helical transmembrane segment spans residues Ala724–Ala744.

Belongs to the PsaA/PsaB family. As to quaternary structure, the PsaA/B heterodimer binds the P700 chlorophyll special pair and subsequent electron acceptors. PSI consists of a core antenna complex that captures photons, and an electron transfer chain that converts photonic excitation into a charge separation. The eukaryotic PSI reaction center is composed of at least 11 subunits. P700 is a chlorophyll a/chlorophyll a' dimer, A0 is one or more chlorophyll a, A1 is one or both phylloquinones and FX is a shared 4Fe-4S iron-sulfur center. is required as a cofactor.

It localises to the plastid. The protein localises to the chloroplast thylakoid membrane. It catalyses the reaction reduced [plastocyanin] + hnu + oxidized [2Fe-2S]-[ferredoxin] = oxidized [plastocyanin] + reduced [2Fe-2S]-[ferredoxin]. PsaA and PsaB bind P700, the primary electron donor of photosystem I (PSI), as well as the electron acceptors A0, A1 and FX. PSI is a plastocyanin-ferredoxin oxidoreductase, converting photonic excitation into a charge separation, which transfers an electron from the donor P700 chlorophyll pair to the spectroscopically characterized acceptors A0, A1, FX, FA and FB in turn. Oxidized P700 is reduced on the lumenal side of the thylakoid membrane by plastocyanin. The polypeptide is Photosystem I P700 chlorophyll a apoprotein A1 (Nicotiana sylvestris (Wood tobacco)).